A 64-amino-acid polypeptide reads, in one-letter code: Large ribosomal subunit protein bL32 (64 aa).

Belongs to the bacterial ribosomal protein bL32 family.

The sequence is that of Large ribosomal subunit protein bL32 from Flavobacterium johnsoniae (strain ATCC 17061 / DSM 2064 / JCM 8514 / BCRC 14874 / CCUG 350202 / NBRC 14942 / NCIMB 11054 / UW101) (Cytophaga johnsonae).